The sequence spans 24 residues: Cytochrome c oxidase subunit 7A2, mitochondrial (24 aa).

The span at 1–13 (FENKVPEKQKLFQ) shows a compositional bias: basic and acidic residues. Positions 1–24 (FENKVPEKQKLFQEDNGIPVHLKG) are disordered. Lysine 10 is modified (N6-acetyllysine).

Belongs to the cytochrome c oxidase VIIa family. As to quaternary structure, component of the cytochrome c oxidase (complex IV, CIV), a multisubunit enzyme composed of 14 subunits. The complex is composed of a catalytic core of 3 subunits MT-CO1, MT-CO2 and MT-CO3, encoded in the mitochondrial DNA, and 11 supernumerary subunits COX4I, COX5A, COX5B, COX6A, COX6B, COX6C, COX7A, COX7B, COX7C, COX8 and NDUFA4, which are encoded in the nuclear genome. The complex exists as a monomer or a dimer and forms supercomplexes (SCs) in the inner mitochondrial membrane with NADH-ubiquinone oxidoreductase (complex I, CI) and ubiquinol-cytochrome c oxidoreductase (cytochrome b-c1 complex, complex III, CIII), resulting in different assemblies (supercomplex SCI(1)III(2)IV(1) and megacomplex MCI(2)III(2)IV(2)). Interacts with PET100.

It localises to the mitochondrion inner membrane. Its pathway is energy metabolism; oxidative phosphorylation. In terms of biological role, component of the cytochrome c oxidase, the last enzyme in the mitochondrial electron transport chain which drives oxidative phosphorylation. The respiratory chain contains 3 multisubunit complexes succinate dehydrogenase (complex II, CII), ubiquinol-cytochrome c oxidoreductase (cytochrome b-c1 complex, complex III, CIII) and cytochrome c oxidase (complex IV, CIV), that cooperate to transfer electrons derived from NADH and succinate to molecular oxygen, creating an electrochemical gradient over the inner membrane that drives transmembrane transport and the ATP synthase. Cytochrome c oxidase is the component of the respiratory chain that catalyzes the reduction of oxygen to water. Electrons originating from reduced cytochrome c in the intermembrane space (IMS) are transferred via the dinuclear copper A center (CU(A)) of subunit 2 and heme A of subunit 1 to the active site in subunit 1, a binuclear center (BNC) formed by heme A3 and copper B (CU(B)). The BNC reduces molecular oxygen to 2 water molecules using 4 electrons from cytochrome c in the IMS and 4 protons from the mitochondrial matrix. The polypeptide is Cytochrome c oxidase subunit 7A2, mitochondrial (COX7A2) (Ovis aries (Sheep)).